A 92-amino-acid polypeptide reads, in one-letter code: Alpha-elapitoxin-Lh2a (92 aa).

Positions 1-21 are cleaved as a signal peptide; that stretch reads MKTLLLTLVVVTIVCLDLGDS. Cystine bridges form between Cys24–Cys41, Cys34–Cys62, Cys47–Cys51, Cys66–Cys77, and Cys78–Cys83.

This sequence belongs to the three-finger toxin family. Long-chain subfamily. Type II alpha-neurotoxin sub-subfamily. As to expression, expressed by the venom gland.

The protein resides in the secreted. Functionally, binds with high affinity to muscular (alpha-1/CHRNA1) and neuronal (alpha-7/CHRNA7) nicotinic acetylcholine receptor (nAChR) and inhibits acetylcholine from binding to the receptor, thereby impairing neuromuscular and neuronal transmission. This chain is Alpha-elapitoxin-Lh2a, found in Hydrophis hardwickii (Hardwick's spine-bellied seasnake).